The sequence spans 493 residues: Alcohol-forming fatty acyl-CoA reductase (493 aa).

This sequence belongs to the fatty acyl-CoA reductase family.

It catalyses the reaction a long-chain fatty acyl-CoA + 2 NADPH + 2 H(+) = a long-chain primary fatty alcohol + 2 NADP(+) + CoA. Functionally, NADPH-dependent alcohol-forming fatty acyl-coenzyme A reductase that catalyzes the reduction of fatty acyl-CoA to fatty alcohols. The recombinant enzyme accepts saturated and mono-unsaturated fatty acyl-CoAs of 16 to 22 carbons. The chain is Alcohol-forming fatty acyl-CoA reductase from Simmondsia chinensis (Jojoba).